The following is a 355-amino-acid chain: Elongation factor Ts (355 aa).

The segment at 82–85 (TDFV) is involved in Mg(2+) ion dislocation from EF-Tu.

This sequence belongs to the EF-Ts family.

Its subcellular location is the cytoplasm. Its function is as follows. Associates with the EF-Tu.GDP complex and induces the exchange of GDP to GTP. It remains bound to the aminoacyl-tRNA.EF-Tu.GTP complex up to the GTP hydrolysis stage on the ribosome. The polypeptide is Elongation factor Ts (Helicobacter pylori (strain Shi470)).